The chain runs to 258 residues: Hydroxyacylglutathione hydrolase (258 aa).

Zn(2+)-binding residues include His-52, His-54, Asp-56, His-57, His-109, Asp-126, and His-164.

Belongs to the metallo-beta-lactamase superfamily. Glyoxalase II family. As to quaternary structure, monomer. It depends on Zn(2+) as a cofactor.

The catalysed reaction is an S-(2-hydroxyacyl)glutathione + H2O = a 2-hydroxy carboxylate + glutathione + H(+). It participates in secondary metabolite metabolism; methylglyoxal degradation; (R)-lactate from methylglyoxal: step 2/2. Thiolesterase that catalyzes the hydrolysis of S-D-lactoyl-glutathione to form glutathione and D-lactic acid. The chain is Hydroxyacylglutathione hydrolase from Xylella fastidiosa (strain M12).